The chain runs to 287 residues: Large ribosomal subunit protein uL2 (287 aa).

Composition is skewed to basic residues over residues 209 to 220 (GRNRWKARRPKV) and 258 to 287 (KTRK…GRQS). A disordered region spans residues 209-287 (GRNRWKARRP…SKRSRGGRQS (79 aa)).

It belongs to the universal ribosomal protein uL2 family. Part of the 50S ribosomal subunit. Forms a bridge to the 30S subunit in the 70S ribosome.

In terms of biological role, one of the primary rRNA binding proteins. Required for association of the 30S and 50S subunits to form the 70S ribosome, for tRNA binding and peptide bond formation. It has been suggested to have peptidyltransferase activity; this is somewhat controversial. Makes several contacts with the 16S rRNA in the 70S ribosome. This chain is Large ribosomal subunit protein uL2, found in Acaryochloris marina (strain MBIC 11017).